We begin with the raw amino-acid sequence, 333 residues long: 4-hydroxythreonine-4-phosphate dehydrogenase (333 aa).

Residues His-133 and Thr-134 each contribute to the substrate site. Positions 169, 214, and 269 each coordinate a divalent metal cation. Substrate contacts are provided by Lys-277, Asn-286, and Arg-295.

It belongs to the PdxA family. Homodimer. Zn(2+) serves as cofactor. It depends on Mg(2+) as a cofactor. The cofactor is Co(2+).

The protein localises to the cytoplasm. The catalysed reaction is 4-(phosphooxy)-L-threonine + NAD(+) = 3-amino-2-oxopropyl phosphate + CO2 + NADH. Its pathway is cofactor biosynthesis; pyridoxine 5'-phosphate biosynthesis; pyridoxine 5'-phosphate from D-erythrose 4-phosphate: step 4/5. Functionally, catalyzes the NAD(P)-dependent oxidation of 4-(phosphooxy)-L-threonine (HTP) into 2-amino-3-oxo-4-(phosphooxy)butyric acid which spontaneously decarboxylates to form 3-amino-2-oxopropyl phosphate (AHAP). The sequence is that of 4-hydroxythreonine-4-phosphate dehydrogenase from Caulobacter vibrioides (strain ATCC 19089 / CIP 103742 / CB 15) (Caulobacter crescentus).